Reading from the N-terminus, the 183-residue chain is Inosine/xanthosine triphosphatase (183 aa).

Belongs to the YjjX NTPase family. As to quaternary structure, homodimer. The cofactor is Mg(2+). Mn(2+) serves as cofactor.

The catalysed reaction is XTP + H2O = XDP + phosphate + H(+). It catalyses the reaction ITP + H2O = IDP + phosphate + H(+). Functionally, phosphatase that hydrolyzes non-canonical purine nucleotides such as XTP and ITP to their respective diphosphate derivatives. Probably excludes non-canonical purines from DNA/RNA precursor pool, thus preventing their incorporation into DNA/RNA and avoiding chromosomal lesions. The chain is Inosine/xanthosine triphosphatase from Vibrio cholerae serotype O1 (strain ATCC 39315 / El Tor Inaba N16961).